A 255-amino-acid polypeptide reads, in one-letter code: MRILCTNDDGIHAPGLKVVEEIARALSDDVWVVAPELDQSGVSHSLSLNDPLRLREVGPRHFAVRGTPTDCVIMGARHILGTKPPDLVLSGVNKGRNVAEDVVYSGTIAGALEGTILGLPSFALSQEFSVETRERPPWDTARTFGPDILRKVMAAGIPKETVINVNFPSCAPEDVLGIRVTRQGKRNLGFLRIDERRDGRNNPYFWIGFERAAMMDTPAEGTDLAALRERYVSVTPLRLDRTNEAFSEALGAALK.

A divalent metal cation is bound by residues Asp-8, Asp-9, Ser-40, and Asn-93.

This sequence belongs to the SurE nucleotidase family. Requires a divalent metal cation as cofactor.

It is found in the cytoplasm. The enzyme catalyses a ribonucleoside 5'-phosphate + H2O = a ribonucleoside + phosphate. Its function is as follows. Nucleotidase that shows phosphatase activity on nucleoside 5'-monophosphates. The protein is 5'-nucleotidase SurE of Bradyrhizobium diazoefficiens (strain JCM 10833 / BCRC 13528 / IAM 13628 / NBRC 14792 / USDA 110).